We begin with the raw amino-acid sequence, 152 residues long: Snaclec lebecin subunit alpha (152 aa).

An N-terminal signal peptide occupies residues 1 to 23 (MGRSISVSFGLLVVFLSLSGTGA). Cystine bridges form between cysteine 27-cysteine 38, cysteine 54-cysteine 147, and cysteine 122-cysteine 139. The 115-residue stretch at 34–148 (YEGGCYYVFD…CELAYHFICS (115 aa)) folds into the C-type lectin domain.

Heterodimer with the beta subunit (AC W5XCJ6); disulfide-linked. As to expression, expressed by the venom gland.

It localises to the secreted. Inhibits human breast cancer cells (MDA-MB231) migration and proliferation, as well as their adhesion to fibrinogen and fibronectin. This inhibition may be due to the binding to receptors of the integrin family, probably alpha-v/beta-3 (ITGAV/ITGB3) (40% inhibition of cell adhesion) and alpha-5/beta-1 (ITGA5/ITGB1) (by comparison with lebectin). In Macrovipera lebetinus (Levantine viper), this protein is Snaclec lebecin subunit alpha.